The sequence spans 440 residues: Probable exopolygalacturonase B (440 aa).

The signal sequence occupies residues 1-20 (MRLHFLPLVALCATTASSLA). Residues Asn65, Asn190, and Asn230 are each glycosylated (N-linked (GlcNAc...) asparagine). Asp260 serves as the catalytic Proton donor. A disulfide bridge connects residues Cys262 and Cys279. Asn268 and Asn280 each carry an N-linked (GlcNAc...) asparagine glycan. Residue His283 is part of the active site. Residues Asn307, Asn334, and Asn371 are each glycosylated (N-linked (GlcNAc...) asparagine). A disulfide bridge links Cys397 with Cys403. An N-linked (GlcNAc...) asparagine glycan is attached at Asn412.

The protein belongs to the glycosyl hydrolase 28 family.

It localises to the secreted. The catalysed reaction is [(1-&gt;4)-alpha-D-galacturonosyl](n) + H2O = alpha-D-galacturonate + [(1-&gt;4)-alpha-D-galacturonosyl](n-1). Specific in hydrolyzing the terminal glycosidic bond of polygalacturonic acid and oligogalacturonates. In Emericella nidulans (strain FGSC A4 / ATCC 38163 / CBS 112.46 / NRRL 194 / M139) (Aspergillus nidulans), this protein is Probable exopolygalacturonase B (pgxB).